Reading from the N-terminus, the 414-residue chain is Glyco-Gag protein (414 aa).

At 1-51 (MSGASSGTAIGAHLFGVSPECRVLIGDEGAGPSKSLSEVSFSVWYQSRAAR) the chain is on the cytoplasmic side. The helical transmembrane segment at 52 to 72 (LVIFCLVASFLVPCLTFLIAE) threads the bilayer. The Extracellular portion of the chain corresponds to 73–414 (TVMGQTIATP…TNLAQVKQVV (342 aa)). N-linked (GlcNAc...) asparagine; by host glycosylation is present at asparagine 134. The segment at 171–282 (VRPFLPPPKP…LREGPNNRPQ (112 aa)) is disordered. Pro residues predominate over residues 174–193 (FLPPPKPPTPLPQPLSPQPS). The segment covering 194–206 (APLTSSLYPVLPK) has biased composition (low complexity). Positions 210-220 (PKPPVLPPDPS) are enriched in pro residues.

In terms of processing, glycosylated by host. Cleaved by host near the middle of the molecule, releasing the c-terminal half containing capsid and nucleoprotein domains op GAG.

The protein resides in the host cell membrane. Plays a role in viral particle release. Presumably acts by facilitating the fission of the virion bud at the cell surface. The protein is Glyco-Gag protein of Felidae (cat family).